A 739-amino-acid polypeptide reads, in one-letter code: Homeobox protein SIX5 (739 aa).

Composition is skewed to low complexity over residues 1 to 24, 34 to 61, and 74 to 83; these read MATL…AAAA, QLLQ…AAGA, and PEAASEPPTG. Disordered regions lie at residues 1–84, 251–294, 361–381, and 617–650; these read MATL…PTGL, NRRQ…AAPV, LTGG…SETK, and LSAQ…FPAP. Positions 201–260 form a DNA-binding region, homeobox; sequence GEETVYCFKERSRAALKACYRGNRYPTPDEKRRLATLTGLSLTQVSNWFKNRRQRDRTGA. Residues 279–289 are compositionally biased toward basic and acidic residues; sequence ESSRSPEDLER. Residues 617–646 are compositionally biased toward low complexity; the sequence is LSAQQPPPAAATTSSTSLPFSPDSPGLLPN.

Belongs to the SIX/Sine oculis homeobox family. As to quaternary structure, probably binds DNA dimer. Interacts with EYA3, and probably EYA1 and EYA2. Expressed in adult but not in fetal eyes. Found in corneal epithelium and endothelium, lens epithelium, ciliary body epithelia, cellular layers of the retina and the sclera.

The protein resides in the cytoplasm. The protein localises to the nucleus. Its function is as follows. Transcription factor that is thought to be involved in regulation of organogenesis. May be involved in determination and maintenance of retina formation. Binds a 5'-GGTGTCAG-3' motif present in the ARE regulatory element of ATP1A1. Binds a 5'-TCA[AG][AG]TTNC-3' motif present in the MEF3 element in the myogenin promoter, and in the IGFBP5 promoter. Thought to be regulated by association with Dach and Eya proteins, and seems to be coactivated by EYA1, EYA2 and EYA3. In Homo sapiens (Human), this protein is Homeobox protein SIX5 (SIX5).